A 545-amino-acid polypeptide reads, in one-letter code: Threonine--tRNA ligase catalytic subunit (545 aa).

The tract at residues 139–433 (DHRLIGEKLD…LLEHFKGKLP (295 aa)) is catalytic. Zn(2+) contacts are provided by C231, H282, and H410.

It belongs to the class-II aminoacyl-tRNA synthetase family. Homodimer. Probably interacts with its editing subunit. Zn(2+) is required as a cofactor.

The protein localises to the cytoplasm. It carries out the reaction tRNA(Thr) + L-threonine + ATP = L-threonyl-tRNA(Thr) + AMP + diphosphate + H(+). Its function is as follows. Catalyzes the attachment of threonine to tRNA(Thr) in a two-step reaction: L-threonine is first activated by ATP to form Thr-AMP and then transferred to the acceptor end of tRNA(Thr). Also activates L-serine and transfers it to tRNA(Thr) but cannot deacylate incorrectly charged amino acid; unlike most archaea the editing function is found in a freestanding protein. The chain is Threonine--tRNA ligase catalytic subunit from Saccharolobus islandicus (strain L.S.2.15 / Lassen #1) (Sulfolobus islandicus).